Here is a 255-residue protein sequence, read N- to C-terminus: Kallikrein-15 (255 aa).

The signal sequence occupies residues Met-1–Ala-15. The propeptide at Gln-16 to Lys-20 is activation peptide. Positions Leu-21–Lys-253 are serine protease. A disulfide bridge connects residues Cys-46 and Cys-62. Catalysis depends on charge relay system residues His-61 and Asp-105. Disulfide bonds link Cys-137/Cys-214, Cys-179/Cys-193, and Cys-204/Cys-229. A glycan (N-linked (GlcNAc...) asparagine) is linked at Asn-170. Residue Ser-208 is the Charge relay system of the active site. Asn-231 carries an N-linked (GlcNAc...) asparagine glycan.

This sequence belongs to the peptidase S1 family. Kallikrein subfamily.

It localises to the secreted. Protease whose physiological substrate is not yet known. This chain is Kallikrein-15 (KLK15), found in Saguinus oedipus (Cotton-top tamarin).